Here is a 472-residue protein sequence, read N- to C-terminus: Cannabinoid receptor 1 (472 aa).

The Extracellular segment spans residues 1-116 (MKSILDGLAD…CFMVLNPSQQ (116 aa)). The interval 2-23 (KSILDGLADTTFRTITTDLLYV) is required for mitochondrial localization. N-linked (GlcNAc...) asparagine glycans are attached at residues Asn77 and Asn83. The chain crosses the membrane as a helical span at residues 117–142 (LAIAVLSLTLGTFTVLENLLVLCVIL). Topologically, residues 143 to 154 (HSRSLRCRPSYH) are cytoplasmic. The helical transmembrane segment at 155–175 (FIGSLAVADLLGSVIFVYSFI) threads the bilayer. Residues 176–187 (DFHVFHRKDSRN) are Extracellular-facing. The helical transmembrane segment at 188 to 212 (VFLFKLGGVTASFTASVGSLFLTAI) threads the bilayer. Topologically, residues 213 to 232 (DRYISIHRPLAYKRIVTRPK) are cytoplasmic. The chain crosses the membrane as a helical span at residues 233 to 255 (AVVAFCLMWTIAIVIAVLPLLGW). Residues 256–273 (NCEKLQSVCSDIFPHIDE) are Extracellular-facing. A helical transmembrane segment spans residues 274–299 (TYLMFWIGVTSVLLLFIVYAYMYILW). The Cytoplasmic segment spans residues 300-344 (KAHSHAVRMIQRGTQKSIIIHTSEDGKVQVTRPDQARMDIRLAKT). The chain crosses the membrane as a helical span at residues 345–365 (LVLILVVLIICWGPLLAIMVY). Residues 366 to 377 (DVFGKMNKLIKT) are Extracellular-facing. A helical membrane pass occupies residues 378 to 399 (VFAFCSMLCLLNSTVNPIIYAL). At 400 to 472 (RSKDLRHAFR…VSTDTSAEAL (73 aa)) the chain is on the cytoplasmic side. Cys415 carries the S-palmitoyl cysteine lipid modification. Residues Ser425 and Ser429 each carry the phosphoserine modification.

It belongs to the G-protein coupled receptor 1 family. In terms of assembly, interacts (via C-terminus) with CNRIP1; this interaction attenuates constitutive, but not agonist-dependent, inhibition of voltage-gated Ca(2+) channels in neurons. Associates with G protein alpha subunits, including G(i) alpha-1/GNAI1, G(i) alpha-3/GNAI3 and G(o)-alpha/GNAO1; palmitoylation is important for interaction with GNAI3 and GNAO1. Post-translationally, palmitoylation at Cys-415 is important for recruitment at plasma membrane and lipid rafts and association with G protein alpha subunits. Widely expressed, with highest levels in fetal and adult brain. Expression levels of isoform 2 and isoform 3 are much lower than those of isoform 1.

Its subcellular location is the cell membrane. The protein resides in the membrane raft. It localises to the mitochondrion outer membrane. It is found in the cell projection. The protein localises to the axon. Its subcellular location is the presynapse. With respect to regulation, hemopressin, a peptide derived from hemoglobin subunit alpha (HBA1 and/or HBA2), acts as an antagonist peptide: hemopressin-binding efficiently blocks cannabinoid receptor CNR1 and subsequent signaling. In terms of biological role, G-protein coupled receptor for endogenous cannabinoids (eCBs), including N-arachidonoylethanolamide (also called anandamide or AEA) and 2-arachidonoylglycerol (2-AG), as well as phytocannabinoids, such as delta(9)-tetrahydrocannabinol (THC). Mediates many cannabinoid-induced effects, acting, among others, on food intake, memory loss, gastrointestinal motility, catalepsy, ambulatory activity, anxiety, chronic pain. Signaling typically involves reduction in cyclic AMP. In the hypothalamus, may have a dual effect on mitochondrial respiration depending upon the agonist dose and possibly upon the cell type. Increases respiration at low doses, while decreases respiration at high doses. At high doses, CNR1 signal transduction involves G-protein alpha-i protein activation and subsequent inhibition of mitochondrial soluble adenylate cyclase, decrease in cyclic AMP concentration, inhibition of protein kinase A (PKA)-dependent phosphorylation of specific subunits of the mitochondrial electron transport system, including NDUFS2. In the hypothalamus, inhibits leptin-induced reactive oxygen species (ROS) formation and mediates cannabinoid-induced increase in SREBF1 and FASN gene expression. In response to cannabinoids, drives the release of orexigenic beta-endorphin, but not that of melanocyte-stimulating hormone alpha/alpha-MSH, from hypothalamic POMC neurons, hence promoting food intake. In the hippocampus, regulates cellular respiration and energy production in response to cannabinoids. Involved in cannabinoid-dependent depolarization-induced suppression of inhibition (DSI), a process in which depolarization of CA1 postsynaptic pyramidal neurons mobilizes eCBs, which retrogradely activate presynaptic CB1 receptors, transiently decreasing GABAergic inhibitory neurotransmission. Also reduces excitatory synaptic transmission. In superior cervical ganglions and cerebral vascular smooth muscle cells, inhibits voltage-gated Ca(2+) channels in a constitutive, as well as agonist-dependent manner. In cerebral vascular smooth muscle cells, cannabinoid-induced inhibition of voltage-gated Ca(2+) channels leads to vasodilation and decreased vascular tone. Induces leptin production in adipocytes and reduces LRP2-mediated leptin clearance in the kidney, hence participating in hyperleptinemia. In adipose tissue, CNR1 signaling leads to increased expression of SREBF1, ACACA and FASN genes. In the liver, activation by endocannabinoids leads to increased de novo lipogenesis and reduced fatty acid catabolism, associated with increased expression of SREBF1/SREBP-1, GCK, ACACA, ACACB and FASN genes. May also affect de novo cholesterol synthesis and HDL-cholesteryl ether uptake. Peripherally modulates energy metabolism. In high carbohydrate diet-induced obesity, may decrease the expression of mitochondrial dihydrolipoyl dehydrogenase/DLD in striated muscles, as well as that of selected glucose/ pyruvate metabolic enzymes, hence affecting energy expenditure through mitochondrial metabolism. In response to cannabinoid anandamide, elicits a pro-inflammatory response in macrophages, which involves NLRP3 inflammasome activation and IL1B and IL18 secretion. In macrophages infiltrating pancreatic islets, this process may participate in the progression of type-2 diabetes and associated loss of pancreatic beta-cells. Its function is as follows. Binds both 2-arachidonoylglycerol (2-AG) and anandamide. Functionally, only binds 2-arachidonoylglycerol (2-AG) with high affinity. Contrary to its effect on isoform 1, 2-AG behaves as an inverse agonist on isoform 2 in assays measuring GTP binding to membranes. Only binds 2-arachidonoylglycerol (2-AG) with high affinity. Contrary to its effect on isoform 1, 2-AG behaves as an inverse agonist on isoform 3 in assays measuring GTP binding to membranes. This Homo sapiens (Human) protein is Cannabinoid receptor 1 (CNR1).